Consider the following 379-residue polypeptide: Cytochrome b (379 aa).

A run of 4 helical transmembrane segments spans residues Phe-34 to Met-54, Trp-78 to Ile-99, Trp-114 to Leu-134, and Phe-179 to Leu-199. His-84 and His-98 together coordinate heme b. Residues His-183 and His-197 each coordinate heme b. A ubiquinone is bound at residue His-202. 4 consecutive transmembrane segments (helical) span residues Tyr-227–Tyr-247, Leu-289–His-309, Leu-321–Gly-341, and Phe-348–Pro-368.

Belongs to the cytochrome b family. In terms of assembly, the cytochrome bc1 complex contains 3 respiratory subunits (MT-CYB, CYC1 and UQCRFS1), 2 core proteins (UQCRC1 and UQCRC2) and probably 6 low-molecular weight proteins. Requires heme b as cofactor.

The protein resides in the mitochondrion inner membrane. Functionally, component of the ubiquinol-cytochrome c reductase complex (complex III or cytochrome b-c1 complex) that is part of the mitochondrial respiratory chain. The b-c1 complex mediates electron transfer from ubiquinol to cytochrome c. Contributes to the generation of a proton gradient across the mitochondrial membrane that is then used for ATP synthesis. This is Cytochrome b (MT-CYB) from Glyptemys muhlenbergii (Bog turtle).